We begin with the raw amino-acid sequence, 490 residues long: Cytochrome P450 2C55 (490 aa).

Residue Cys435 participates in heme binding.

The protein belongs to the cytochrome P450 family. Heme is required as a cofactor.

The protein localises to the endoplasmic reticulum membrane. Its subcellular location is the microsome membrane. The enzyme catalyses an organic molecule + reduced [NADPH--hemoprotein reductase] + O2 = an alcohol + oxidized [NADPH--hemoprotein reductase] + H2O + H(+). Its function is as follows. Metabolizes arachidonic acid mainly to 19-hydroxyeicosatetraenoic acid (HETE). The sequence is that of Cytochrome P450 2C55 (Cyp2c55) from Rattus norvegicus (Rat).